A 599-amino-acid polypeptide reads, in one-letter code: Sulfite reductase [NADPH] flavoprotein alpha-component (599 aa).

Residues 64 to 202 (ITIISASQTG…AASEWRARVV (139 aa)) form the Flavodoxin-like domain. Residues 70-75 (SQTGNA), 117-120 (STQG), and 153-162 (LGDSSYEFFC) each bind FMN. An FAD-binding FR-type domain is found at 234–448 (DSPLVASLSV…IEHNDNFRLP (215 aa)). Residues Thr-322, Ala-356, 386-389 (RLYS), 404-406 (TVG), Tyr-410, and 419-422 (GGAS) contribute to the FAD site. Residues 519 to 520 (SR), 525 to 529 (KVYVQ), and Asp-561 contribute to the NADP(+) site. Tyr-599 is an FAD binding site.

Belongs to the NADPH-dependent sulphite reductase flavoprotein subunit CysJ family. The protein in the N-terminal section; belongs to the flavodoxin family. This sequence in the C-terminal section; belongs to the flavoprotein pyridine nucleotide cytochrome reductase family. Alpha(8)-beta(8). The alpha component is a flavoprotein, the beta component is a hemoprotein. FAD is required as a cofactor. FMN serves as cofactor.

The enzyme catalyses hydrogen sulfide + 3 NADP(+) + 3 H2O = sulfite + 3 NADPH + 4 H(+). The protein operates within sulfur metabolism; hydrogen sulfide biosynthesis; hydrogen sulfide from sulfite (NADPH route): step 1/1. In terms of biological role, component of the sulfite reductase complex that catalyzes the 6-electron reduction of sulfite to sulfide. This is one of several activities required for the biosynthesis of L-cysteine from sulfate. The flavoprotein component catalyzes the electron flow from NADPH -&gt; FAD -&gt; FMN to the hemoprotein component. This is Sulfite reductase [NADPH] flavoprotein alpha-component from Escherichia coli O9:H4 (strain HS).